Here is a 424-residue protein sequence, read N- to C-terminus: L-glutamine:2-deoxy-scyllo-inosose aminotransferase (424 aa).

Lysine 202 is subject to N6-(pyridoxal phosphate)lysine.

Belongs to the DegT/DnrJ/EryC1 family. L-glutamine:2-deoxy-scyllo-inosose/scyllo-inosose aminotransferase subfamily. Pyridoxal 5'-phosphate serves as cofactor.

It carries out the reaction 2-deoxy-L-scyllo-inosose + L-glutamine = 2-deoxy-scyllo-inosamine + 2-oxoglutaramate. The catalysed reaction is 3-amino-2,3-dideoxy-scyllo-inosose + L-glutamine = 2-deoxystreptamine + 2-oxoglutaramate. It participates in metabolic intermediate biosynthesis; 2-deoxystreptamine biosynthesis; 2-deoxystreptamine from D-glucose 6-phosphate: step 2/4. Its pathway is antibiotic biosynthesis; lividomycin biosynthesis. In terms of biological role, catalyzes the PLP-dependent transamination of 2-deoxy-scyllo-inosose (2-DOI) to form 2-deoxy-scyllo-inosamine (2-DOIA) using L-glutamine as the amino donor. Also catalyzes the transamination of 3-amino-2,3-dideoxy-scyllo-inosose (keto-2-DOIA) into 2-deoxystreptamine (2-DOS). This chain is L-glutamine:2-deoxy-scyllo-inosose aminotransferase (livS), found in Streptomyces lividus.